The sequence spans 368 residues: Peptide chain release factor 2 (368 aa).

N5-methylglutamine is present on Gln-250.

Belongs to the prokaryotic/mitochondrial release factor family. In terms of processing, methylated by PrmC. Methylation increases the termination efficiency of RF2.

The protein localises to the cytoplasm. Its function is as follows. Peptide chain release factor 2 directs the termination of translation in response to the peptide chain termination codons UGA and UAA. The protein is Peptide chain release factor 2 of Rickettsia bellii (strain RML369-C).